The primary structure comprises 1895 residues: Diacylglycerol kinase eta (1895 aa).

The segment covering 1–10 (MAHLKLDTLH) has biased composition (basic and acidic residues). Residues 1–37 (MAHLKLDTLHVQRSPRGSRRSSPSSGRSSACSSGSIS) form a disordered region. Over residues 20-37 (RSSPSSGRSSACSSGSIS) the composition is skewed to low complexity. The 94-residue stretch at 82–175 (AIIKEGFLLK…WLGSLKTATA (94 aa)) folds into the PH domain. 2 Phorbol-ester/DAG-type zinc fingers span residues 195–245 (HHHW…IANC) and 267–318 (PHQW…AVAC). The region spanning 349-485 (GNFSPLLVFV…DRWSIMVFEK (137 aa)) is the DAGKc domain. Disordered regions lie at residues 781-801 (ANID…ENTP), 1012-1053 (TTLC…MARL), 1113-1137 (QHRG…GANL), and 1172-1191 (PNTI…HGQD). The span at 1113–1128 (QHRGGDNDSDYPEHEQ) shows a compositional bias: basic and acidic residues. The segment covering 1172-1184 (PNTILTTSTSPTK) has biased composition (polar residues). Positions 1832–1895 (WSVNEVVTWL…LQAIKDLSEN (64 aa)) constitute an SAM domain.

This sequence belongs to the eukaryotic diacylglycerol kinase family.

Its subcellular location is the cytoplasm. It catalyses the reaction a 1,2-diacyl-sn-glycerol + ATP = a 1,2-diacyl-sn-glycero-3-phosphate + ADP + H(+). Functionally, phosphorylates diacylglycerol (DAG) to generate phosphatidic acid (PA). In Drosophila melanogaster (Fruit fly), this protein is Diacylglycerol kinase eta.